Consider the following 176-residue polypeptide: Translation initiation factor IF-3 (176 aa).

It belongs to the IF-3 family. In terms of assembly, monomer.

It is found in the cytoplasm. IF-3 binds to the 30S ribosomal subunit and shifts the equilibrium between 70S ribosomes and their 50S and 30S subunits in favor of the free subunits, thus enhancing the availability of 30S subunits on which protein synthesis initiation begins. This Streptococcus thermophilus (strain ATCC BAA-491 / LMD-9) protein is Translation initiation factor IF-3.